The following is a 739-amino-acid chain: Poly(A) polymerase alpha (739 aa).

Low complexity predominate over residues 1 to 17 (MPFPVTTQGSQQTQPPQ). A disordered region spans residues 1-23 (MPFPVTTQGSQQTQPPQKHYGIT). Phosphoserine is present on residues Ser10 and Ser24. ATP-binding positions include 100–102 (FGS), Thr109, 113–115 (DID), Asp167, Lys228, Tyr237, and 246–247 (GV). Positions 113, 115, and 167 each coordinate Mg(2+). Glycyl lysine isopeptide (Lys-Gly) (interchain with G-Cter in SUMO) cross-links involve residues Lys444, Lys445, Lys506, and Lys507. Positions 490–507 (RKQLHQLLPSHVLQKKKK) match the Nuclear localization signal 1 motif. Disordered regions lie at residues 501 to 565 (VLQK…AVTA) and 580 to 700 (QINS…TIQT). The ser/Thr-rich stretch occupies residues 508 to 643 (HSTEGVKLTP…AKIPNPIVGV (136 aa)). Positions 518 to 534 (LNDSSLDLSMDSDNSMS) are enriched in low complexity. Polar residues predominate over residues 535–557 (VPSPTSAMKTSPLNSSGSSQGRN). Ser537 carries the phosphoserine; by MAPK modification. The residue at position 558 (Ser558) is a Phosphoserine. Low complexity predominate over residues 583–594 (SSESSGGTSSES). Positions 595-604 (IPQTATQPAI) are enriched in polar residues. A compositionally biased stretch (low complexity) spans 611–620 (TVSRVVSSTR). 2 positions are modified to N6-acetyllysine: Lys635 and Lys644. Residues 644-659 (KRTSSPHKEESPKKTK) carry the Nuclear localization signal 2 motif. Composition is skewed to basic and acidic residues over residues 649 to 660 (PHKEESPKKTKT) and 676 to 686 (GHDKTETKEQL). The required for interaction with NUDT21 stretch occupies residues 671–739 (CLALSGHDKT…KNSIKLRLNR (69 aa)). Low complexity predominate over residues 688 to 700 (TETSTTQSETIQT). At Lys730 the chain carries N6-acetyllysine; alternate. Lys730 is covalently cross-linked (Glycyl lysine isopeptide (Lys-Gly) (interchain with G-Cter in SUMO); alternate). A Phosphoserine modification is found at Ser732. N6-acetyllysine; alternate is present on Lys734. Lys734 participates in a covalent cross-link: Glycyl lysine isopeptide (Lys-Gly) (interchain with G-Cter in SUMO); alternate.

This sequence belongs to the poly(A) polymerase family. In terms of assembly, monomer. Found in a complex with CPSF1, FIP1L1 and PAPOLA. Interacts with AHCYL1 and FIP1L1; the interaction with AHCYL1 seems to increase interaction with FIP1L1. Interacts with NUDT21; the interaction is diminished by acetylation. Interacts with KPNB1; the interaction promotes PAP nuclear import and is inhibited by acetylation of PAP. Mg(2+) serves as cofactor. Mn(2+) is required as a cofactor. In terms of processing, polysumoylated. Varying sumoylation depending on tissue- and cell-type. Highly sumoylated in bladder and NIH 3T3 cells. Sumoylation is required for nuclear localization and enhances PAP stability. Desumoylated by SENP1. Inhibits polymerase activity. Post-translationally, hyperphosphorylation on multiple CDK2 consensus and non-consensus sites in the C-terminal Ser/Thr-rich region represses PAP activity in late M-phase. Phosphorylation/dephosphorylation may regulate the interaction between PAP and CPSF. Acetylated in the C-terminus. Acetylation decreases interaction with NUDT21 and KPNB1, and inhibits nuclear localization through inhibiting binding to the importin alpha/beta complex.

It is found in the nucleus. The enzyme catalyses RNA(n) + ATP = RNA(n)-3'-adenine ribonucleotide + diphosphate. Functionally, polymerase that creates the 3'-poly(A) tail of mRNA's. Also required for the endoribonucleolytic cleavage reaction at some polyadenylation sites. May acquire specificity through interaction with a cleavage and polyadenylation specificity factor (CPSF) at its C-terminus. This is Poly(A) polymerase alpha (PAPOLA) from Bos taurus (Bovine).